The following is a 320-amino-acid chain: Pantothenate kinase (320 aa).

96 to 103 (GSVAVGKS) contributes to the ATP binding site.

The protein belongs to the prokaryotic pantothenate kinase family.

It localises to the cytoplasm. It catalyses the reaction (R)-pantothenate + ATP = (R)-4'-phosphopantothenate + ADP + H(+). It participates in cofactor biosynthesis; coenzyme A biosynthesis; CoA from (R)-pantothenate: step 1/5. In Brevibacillus brevis (strain 47 / JCM 6285 / NBRC 100599), this protein is Pantothenate kinase.